The primary structure comprises 384 residues: Interstitial collagenase (384 aa).

A signal peptide spans 1-25 (MLSGLWSSILALLGVFLQSVGEFRA). Positions 26-88 (ETQEQDVEIV…STCGVPDVGE (63 aa)) are cleaved as a propeptide — activation peptide. A Cysteine switch motif is present at residues 79 to 86 (STCGVPDV). Residue cysteine 81 participates in Zn(2+) binding. Ca(2+) contacts are provided by aspartate 113 and aspartate 129. The Zn(2+) site is built by histidine 139 and aspartate 141. Ca(2+) is bound by residues aspartate 146, glycine 147, glycine 149, and asparagine 151. Residue histidine 154 coordinates Zn(2+). Residues glycine 161, glycine 163, and aspartate 165 each coordinate Ca(2+). A Zn(2+)-binding site is contributed by histidine 167. Ca(2+) contacts are provided by aspartate 169, glutamate 170, and glutamate 172. Position 189 (histidine 189) interacts with Zn(2+). The active site involves glutamate 190. Zn(2+) contacts are provided by histidine 193 and histidine 199. The tract at residues 218-239 (LSQDDIDGPSGNPVQPRGPQTP) is disordered. The cysteines at positions 242 and 381 are disulfide-linked. 3 residues coordinate Ca(2+): aspartate 249, glutamine 277, and aspartate 347. Hemopexin repeat units follow at residues 273-319 (ELGL…FGFP) and 333-381 (KQSM…WFNC).

This sequence belongs to the peptidase M10A family. Requires Ca(2+) as cofactor. It depends on Zn(2+) as a cofactor.

Its subcellular location is the secreted. It is found in the extracellular space. The protein resides in the extracellular matrix. It catalyses the reaction Cleavage of the triple helix of collagen at about three-quarters of the length of the molecule from the N-terminus, at 775-Gly-|-Ile-776 in the alpha1(I) chain. Cleaves synthetic substrates and alpha-macroglobulins at bonds where P1' is a hydrophobic residue.. Its activity is regulated as follows. Can be activated without removal of the activation peptide. In terms of biological role, cleaves collagens of types I, II, and III at one site in the helical domain. Also cleaves collagens of types VII and X. The protein is Interstitial collagenase of Aquarana catesbeiana (American bullfrog).